The following is a 459-amino-acid chain: ATP-dependent 6-phosphofructokinase (459 aa).

ATP-binding positions include G89, 154-155, and 179-182; these read RG and GDGG. D180 provides a ligand contact to Mg(2+). Substrate is bound by residues 208–210, 253–255, E309, and 368–371; these read TID, MGR, and YAIR. Residue D210 is the Proton acceptor of the active site.

The protein belongs to the phosphofructokinase type A (PFKA) family. PPi-dependent PFK group II subfamily. Atypical ATP-dependent clade 'X' sub-subfamily. As to quaternary structure, homodimer. Mg(2+) is required as a cofactor.

Its subcellular location is the cytoplasm. It catalyses the reaction beta-D-fructose 6-phosphate + ATP = beta-D-fructose 1,6-bisphosphate + ADP + H(+). Its pathway is carbohydrate degradation; glycolysis; D-glyceraldehyde 3-phosphate and glycerone phosphate from D-glucose: step 3/4. With respect to regulation, AMP causes 20-40% inhibition and diphosphate causes 20-50% inhibition. ADP, citrate, PEP and FBP have no effect. In terms of biological role, catalyzes the phosphorylation of D-fructose 6-phosphate to fructose 1,6-bisphosphate by ATP, the first committing step of glycolysis. The protein is ATP-dependent 6-phosphofructokinase of Amycolatopsis methanolica.